A 342-amino-acid polypeptide reads, in one-letter code: N-acetyl-gamma-glutamyl-phosphate reductase (342 aa).

Cysteine 149 is a catalytic residue.

Belongs to the NAGSA dehydrogenase family. Type 1 subfamily.

Its subcellular location is the cytoplasm. It carries out the reaction N-acetyl-L-glutamate 5-semialdehyde + phosphate + NADP(+) = N-acetyl-L-glutamyl 5-phosphate + NADPH + H(+). The protein operates within amino-acid biosynthesis; L-arginine biosynthesis; N(2)-acetyl-L-ornithine from L-glutamate: step 3/4. Its function is as follows. Catalyzes the NADPH-dependent reduction of N-acetyl-5-glutamyl phosphate to yield N-acetyl-L-glutamate 5-semialdehyde. This Thiobacillus denitrificans (strain ATCC 25259 / T1) protein is N-acetyl-gamma-glutamyl-phosphate reductase.